The sequence spans 599 residues: Omega-hydroxyceramide transacylase (599 aa).

Residues 16–185 enclose the PNPLA domain; it reads ISFSGSGFLS…TSMQPCSFWT (170 aa). Positions 51–55 match the GXSXG motif; that stretch reads GTSAG. The active-site Nucleophile is the S53. D172 functions as the Proton acceptor in the catalytic mechanism. Positions 172–174 match the DGA/G motif; that stretch reads DGG. The interval 289 to 563 is disordered; sequence PPPPSLQNLP…PASKLKSAPC (275 aa). Polar residues-rich tracts occupy residues 325 to 335 and 350 to 362; these read SSAAPSVQTPE and VSISKQPSVSPLS. The segment covering 443–454 has biased composition (low complexity); that stretch reads SPESPRLLLRSS. The span at 468 to 478 shows a compositional bias: pro residues; sequence PLSPSTPPAGP. The span at 490–501 shows a compositional bias: polar residues; the sequence is ATGSPALSQLTG. Over residues 551-563 the composition is skewed to low complexity; the sequence is SKKPASKLKSAPC.

As to expression, specifically expressed in skin by keratinocytes, at the boundary area between the nucleated stratum granulosum and the denucleated stratum corneum in the epidermis (at protein level). Also expressed in stomach and other surface lining tissues like intestine and tongue. Also detected in testis as well as in other tissues but at very low level.

It is found in the cytoplasm. It carries out the reaction an N-(omega-hydroxy-ultra-long chain fatty acyl)-sphingoid base + a (9Z,12Z)-octadecadienoyl-containing triacyl-sn-glycerol = an N-[omega-(9Z,12Z-octadecadienoyloxy)-O-ultra-long chain fatty acyl]-sphingoid base + a diacylglycerol. The enzyme catalyses an N-(omega-hydroxy-ultra-long chain fatty acyl)-sphing-4-enine + a (9Z,12Z)-octadecadienoyl-containing triacyl-sn-glycerol = an N-(omega-(9Z,12Z-octadecadienoyloxy)-ultra-long chain fatty acyl)-sphing-4-enine + a diacylglycerol. It catalyses the reaction N-(28-hydroxyoctacosanoyl)-sphing-4-enine + a (9Z,12Z)-octadecadienoyl-containing triacyl-sn-glycerol = N-(28-(9Z,12Z-octadecadienoyloxy)-octacosanoyl)-sphing-4-enine + a diacylglycerol. The catalysed reaction is N-(30-hydroxytriacontanoyl)-sphing-4-enine + 1,2,3-tri-(9Z,12Z)-octadecadienoylglycerol = N-[30-(9Z,12Z-octadecadienoyloxy)-triacontanoyl]-sphing-4-enine + di-(9Z,12Z)-octadecadienoylglycerol. It carries out the reaction N-(32-hydroxydotriacontanoyl)-sphing-4-enine + a (9Z,12Z)-octadecadienoyl-containing triacyl-sn-glycerol = N-(32-(9Z,12Z-octadecadienoyloxy)-dotricontanoyl)-sphing-4-enine + a diacylglycerol. The enzyme catalyses N-(32-hydroxydotriacontenoyl)-sphing-4-enine + a (9Z,12Z)-octadecadienoyl-containing triacyl-sn-glycerol = an N-(32-(9Z,12Z-octadecadienoyloxy)-dotriacontenoyl)-sphing-4-enine + a diacylglycerol. It catalyses the reaction an N-(34-hydroxytetratriacontenoyl)-sphing-4-enine + a (9Z,12Z)-octadecadienoyl-containing triacyl-sn-glycerol = an N-(34-(9Z,12Z-octadecadienoyloxy)-tetratriacontenoyl)-sphing-4-enine + a diacylglycerol. The catalysed reaction is an N-(34-hydroxytetratriacontadienoyl)-sphing-4-enine + a (9Z,12Z)-octadecadienoyl-containing triacyl-sn-glycerol = an N-(34-(9Z,12Z-octadecadienoyloxy)-tetratriacontadienoyl)-sphing-4-enine + a diacylglycerol. It carries out the reaction an N-(36-hydroxyhexatriacontenoyl)-sphing-4-enine + a (9Z,12Z)-octadecadienoyl-containing triacyl-sn-glycerol = an N-(36-(9Z,12Z-octadecadienoyloxy)-hexatriacontenoyl)-sphing-4-enine + a diacylglycerol. The enzyme catalyses an N-(36-hydroxyhexatriacontadienoyl)-sphing-4-enine + a (9Z,12Z)-octadecadienoyl-containing triacyl-sn-glycerol = an N-(36-(9Z,12Z-octadecadienoyloxy)-hexatriacontadienoyl)-sphing-4-enine + a diacylglycerol. It catalyses the reaction an N-(38-hydroxyoctatriacontenoyl)-sphing-4-enine + a (9Z,12Z)-octadecadienoyl-containing triacyl-sn-glycerol = an N-(38-(9Z,12Z-octadecadienoyloxy)-octatriacontenoyl)-sphing-4-enine + a diacylglycerol. Its function is as follows. Omega-hydroxyceramide transacylase involved in the synthesis of omega-O-acylceramides (esterified omega-hydroxyacyl-sphingosine; EOS), which are extremely hydrophobic lipids involved in skin barrier formation. Catalyzes the last step of the synthesis of omega-O-acylceramides by transferring linoleic acid from triglycerides to an omega-hydroxyceramide. Omega-O-acylceramides, are required for the biogenesis of lipid lamellae in the stratum corneum and the formation of the cornified lipid envelope which are essential for the epidermis barrier function. These lipids also play a role in keratinocyte differentiation. May also act on omega-hydroxylated ultra-long chain fatty acids (omega-OH ULCFA) and acylglucosylceramides (GlcEOS). This chain is Omega-hydroxyceramide transacylase, found in Mus musculus (Mouse).